Reading from the N-terminus, the 264-residue chain is S-adenosylmethionine decarboxylase proenzyme (264 aa).

Residue serine 112 is the Schiff-base intermediate with substrate; via pyruvic acid of the active site. Pyruvic acid (Ser); by autocatalysis is present on serine 112. Histidine 117 acts as the Proton acceptor; for processing activity in catalysis. Cysteine 140 (proton donor; for catalytic activity) is an active-site residue.

Belongs to the prokaryotic AdoMetDC family. Type 2 subfamily. In terms of assembly, heterooctamer of four alpha and four beta chains arranged as a tetramer of alpha/beta heterodimers. Pyruvate serves as cofactor. Is synthesized initially as an inactive proenzyme. Formation of the active enzyme involves a self-maturation process in which the active site pyruvoyl group is generated from an internal serine residue via an autocatalytic post-translational modification. Two non-identical subunits are generated from the proenzyme in this reaction, and the pyruvate is formed at the N-terminus of the alpha chain, which is derived from the carboxyl end of the proenzyme. The post-translation cleavage follows an unusual pathway, termed non-hydrolytic serinolysis, in which the side chain hydroxyl group of the serine supplies its oxygen atom to form the C-terminus of the beta chain, while the remainder of the serine residue undergoes an oxidative deamination to produce ammonia and the pyruvoyl group blocking the N-terminus of the alpha chain.

The catalysed reaction is S-adenosyl-L-methionine + H(+) = S-adenosyl 3-(methylsulfanyl)propylamine + CO2. The protein operates within amine and polyamine biosynthesis; S-adenosylmethioninamine biosynthesis; S-adenosylmethioninamine from S-adenosyl-L-methionine: step 1/1. Catalyzes the decarboxylation of S-adenosylmethionine to S-adenosylmethioninamine (dcAdoMet), the propylamine donor required for the synthesis of the polyamines spermine and spermidine from the diamine putrescine. The chain is S-adenosylmethionine decarboxylase proenzyme from Salmonella typhi.